A 688-amino-acid polypeptide reads, in one-letter code: MTVDAQDSTPAPPADRRGAELETGGVGEQSEQPKNKSNGDGNAPAETGQKPNPKDPSRPRRKKARRACFACQRAHLTCGDERPCQRCIKRGLQDACHDGVRKKAKYLHDAPDGALMPGIGGNFYNNTMRSNLPLSRNGANAVNATTQPSSSPNFYPTPQSNSYSVYQENTMNQNSFTSQSPVSPTFTLKANPAARNNSLSSQVNQQPPSTGVSGATNPSQNPFAGPFFDPSDPALFNFDLSSMNFENRYGALEFGMLGHMATGAGDSPSDSATQRGSMGRSGSAQFSGTPITGAAAFGESPGGQQPFIFGDPLLNEWSSGQPTGQTHVNVGGVYPQSGQGSVIPGHLTKADAPHAFAIESGPGSFASPNATTSPQITTGFDDATFSSAVTAKSNGLSANGPRPTITTPSLKHQNLQVGVRRRQRNPSSIYENVKEPYAYTNRFHNLTAFIQRRFSPQKTLQIAKALASIRPSFIATTKTLNRDDLIFMEKCFQRTLFEYEDFINACGTPTIVCRRTGEIAAVGKEFSILTGWKKDVLLGKEPNLNVNTGGSVPGSGTSSRSFTPRGSVAESTPGRPQPVFLAELLDDDSVVEFYEDFARLAFGDSRGSVMTTCKLLKYKTKEDMENQSDDNQRWNSHLRKGGIASEAGMNQLGFKDGKIECAYCWTVKRDVFDIPMLIVMNASSTNLR.

The tract at residues methionine 1–arginine 61 is disordered. Polar residues predominate over residues glutamine 29–aspartate 40. The zn(2)-C6 fungal-type DNA-binding region spans cysteine 68–cysteine 96. Disordered regions lie at residues asparagine 137–serine 162, asparagine 174–phenylalanine 228, alanine 264–glycine 302, and asparagine 547–glycine 574. Composition is skewed to polar residues over residues asparagine 174–proline 222 and proline 268–proline 290. The segment covering asparagine 547–serine 559 has biased composition (low complexity).

It belongs to the ERT1/acuK family.

Its subcellular location is the nucleus. Its function is as follows. Transcription factor which regulates nonfermentable carbon utilization. Activator of gluconeogenetic genes. This chain is Transcription activator of gluconeogenesis acuK (acuK), found in Aspergillus oryzae (strain ATCC 42149 / RIB 40) (Yellow koji mold).